A 462-amino-acid polypeptide reads, in one-letter code: Centrosomal protein of 55 kDa (462 aa).

A compositionally biased stretch (basic and acidic residues) spans 1 to 11 (MSSRSPKDLIK). The segment at 1-25 (MSSRSPKDLIKSKWGSRPSSSKSDT) is disordered. A compositionally biased stretch (low complexity) spans 12–23 (SKWGSRPSSSKS). Coiled-coil stretches lie at residues 50–185 (KVAN…QQWL) and 228–400 (YLQE…KQLH). Phosphoserine occurs at positions 96 and 99. The interaction with TSG101 stretch occupies residues 157–235 (ANCFNSSMNS…EGYLQEEKQK (79 aa)). The interval 160 to 214 (FNSSMNSIHEKEMQLKDALEKNQQWLVYDQQREAYVKGLLAKIFELEKRTETAAA) is interaction with PDCD6IP. Residues 354-462 (QMQACTLDFE…LLVHVEYCMK (109 aa)) are required for localization to the interphase centrosome and to the midbody during cytokinesis. 2 positions are modified to phosphoserine: serine 423 and serine 426. Threonine 428 bears the Phosphothreonine mark. Serine 434 carries the phosphoserine; by PLK1 modification.

As to quaternary structure, homodimer. Interacts (phosphorylated on Ser-423 and Ser-426) with PLK1; the interaction is indirect via the MTMR3:MTMR4 heterooligomer, occurs during early mitosis, regulates the phosphorylation of CEP55 by PLK1 and its recruitment to the midbody where it can mediate cell abscission. Interacts with AKAP9/CG-NAP; the interaction occurs in interphase and is lost upon mitotic entry. Interacts with PCNT/Kendrin; the interaction occurs in interphase and is lost upon mitotic entry. Directly interacts with PDCD6IP; this interaction is required for PDCD6IP targeting to the midbody; CEP55 binds PDCD6IP in a 2:1 stoichiometry; PDCD6IP competes with TSG101 for the same binding site. Interacts with TSG101; TSG101 competes with PDCD6IP for the same binding site; interaction is required for cytokinesis. Interacts with MVB12A, VPS37B, VPS37C and VPS28. There is a hierachy of phosphorylation, where both Ser-423 and Ser-426 are phosphorylated at the onset of mitosis, prior to Ser-434. Phosphorylation at Ser-423 and Ser-426 is required for dissociation from the centrosome at the G2/M boundary. Phosphorylation at the 3 sites, Ser-423, Ser-426 and Ser-434, is required for protein function at the final stages of cell division to complete cytokinesis successfully.

The protein resides in the cytoplasm. It localises to the cytoskeleton. It is found in the microtubule organizing center. The protein localises to the centrosome. Its subcellular location is the centriole. The protein resides in the cleavage furrow. It localises to the midbody. It is found in the midbody ring. Plays a role in mitotic exit and cytokinesis. Recruits PDCD6IP and TSG101 to midbody during cytokinesis. Required for successful completion of cytokinesis. Not required for microtubule nucleation. Plays a role in the development of the brain and kidney. This chain is Centrosomal protein of 55 kDa, found in Rattus norvegicus (Rat).